A 661-amino-acid chain; its full sequence is MADNKGRRDTFDVSGDTNTNATSNKRSIEDKIEADLDKIMKKGSFTPADALELYNKYGDENEYLVDKILKMNSKKNLKIRKQARLLAEKIYQRYNNGTKPLHEILEKMLKYKKENKWSDKEYDEFRKELTNLLTGNRALEIDYNQNLTSYKSRINRALGGIKNEEVIRQADSGLRIKDSEKGVLQDILNMYDRTANLHRTVFMHSLMYEDCSLVAITGEFDRKRHLATNYIDPILACMFIPKIDIFEIHMLYANFGSIIKARSERKQITNEPDLLLYYDITSDPNDVVCEINSPIADLRNRYRVQIALWGIVMKLRNGNYYDSEAMDDFSKTLDACRNNLYDNADLAYNNDEGAIMRRLLSVFSLRPTIIVTKPVYSIASFAMGQLMPQLIMGANGVPSPFGQSMNPFNNQPIYTITSIPMITLQIPPITDNAEPIDLRSATTQTLWVNENKTIIPKEQSIIYSKEVLIFYINRRIQRIQLKTFSNPLSFSQLPLTMSSFERLNGYPVHVPDRLVLDRGDEVYNLRSVVSVTETKIGGLSTSLVEGLPSNSILGQNSQSTGIITGRTGLITKPRNFETGVFEPEYYLYDPFGASLPVRHPDQSGYFTNKPISHIPPLYSPSVDLTGGIENPSFFDRASRTGTIFIYAKPQGYNPNQPLSLF.

A compositionally biased stretch (basic and acidic residues) spans 1–11 (MADNKGRRDTF). Residues 1 to 26 (MADNKGRRDTFDVSGDTNTNATSNKR) form a disordered region. A compositionally biased stretch (polar residues) spans 15-25 (GDTNTNATSNK). A coiled-coil region spans residues 112–140 (KKENKWSDKEYDEFRKELTNLLTGNRALE).

It is found in the virion. The chain is Putative core protein L410 from Acanthamoeba polyphaga (Amoeba).